Reading from the N-terminus, the 61-residue chain is Large ribosomal subunit protein uL29 (61 aa).

Belongs to the universal ribosomal protein uL29 family.

In Xanthomonas euvesicatoria pv. vesicatoria (strain 85-10) (Xanthomonas campestris pv. vesicatoria), this protein is Large ribosomal subunit protein uL29.